We begin with the raw amino-acid sequence, 147 residues long: Transthyretin (147 aa).

Residues 1–20 (MASHRLLLLCLAGLVFVSEA) form the signal peptide. Cys30 is modified (sulfocysteine). An L-thyroxine-binding site is contributed by Lys35. Glu62 bears the 4-carboxyglutamate mark. Ser72 bears the Phosphoserine mark. Glu74 contributes to the L-thyroxine binding site. N-linked (GlcNAc...) asparagine glycosylation occurs at Asn118. Ser137 contributes to the L-thyroxine binding site.

The protein belongs to the transthyretin family. Homotetramer. Dimer of dimers. In the homotetramer, subunits assemble around a central channel that can accommodate two ligand molecules. Interacts with RBP4. In terms of processing, sulfonation of the reactive cysteine Cys-30 enhances the stability of the native conformation of TTR, avoiding misassembly of the protein leading to amyloid formation. As to expression, detected in brain.

It localises to the secreted. Its function is as follows. Thyroid hormone-binding protein. Probably transports thyroxine from the bloodstream to the brain. This Pan troglodytes (Chimpanzee) protein is Transthyretin (TTR).